Consider the following 213-residue polypeptide: Thymidylate kinase (213 aa).

An ATP-binding site is contributed by 10–17; the sequence is GLEGAGKT.

The protein belongs to the thymidylate kinase family.

The catalysed reaction is dTMP + ATP = dTDP + ADP. Functionally, phosphorylation of dTMP to form dTDP in both de novo and salvage pathways of dTTP synthesis. This chain is Thymidylate kinase, found in Enterobacter sp. (strain 638).